Consider the following 239-residue polypeptide: Small ribosomal subunit protein uS3 (239 aa).

The 69-residue stretch at 38-106 (IRELIEERFK…KTFVNVVEIK (69 aa)) folds into the KH type-2 domain.

The protein belongs to the universal ribosomal protein uS3 family. As to quaternary structure, part of the 30S ribosomal subunit. Forms a tight complex with proteins S10 and S14.

In terms of biological role, binds the lower part of the 30S subunit head. Binds mRNA in the 70S ribosome, positioning it for translation. In Elusimicrobium minutum (strain Pei191), this protein is Small ribosomal subunit protein uS3.